The chain runs to 428 residues: 3-phosphoshikimate 1-carboxyvinyltransferase (428 aa).

3-phosphoshikimate contacts are provided by lysine 19, serine 20, and arginine 24. Lysine 19 is a phosphoenolpyruvate binding site. Residues glycine 91 and arginine 119 each coordinate phosphoenolpyruvate. 3-phosphoshikimate is bound by residues serine 164, glutamine 166, aspartate 312, and lysine 339. Position 166 (glutamine 166) interacts with phosphoenolpyruvate. The Proton acceptor role is filled by aspartate 312. The phosphoenolpyruvate site is built by arginine 343 and arginine 386.

It belongs to the EPSP synthase family. In terms of assembly, monomer.

It localises to the cytoplasm. The catalysed reaction is 3-phosphoshikimate + phosphoenolpyruvate = 5-O-(1-carboxyvinyl)-3-phosphoshikimate + phosphate. It functions in the pathway metabolic intermediate biosynthesis; chorismate biosynthesis; chorismate from D-erythrose 4-phosphate and phosphoenolpyruvate: step 6/7. In terms of biological role, catalyzes the transfer of the enolpyruvyl moiety of phosphoenolpyruvate (PEP) to the 5-hydroxyl of shikimate-3-phosphate (S3P) to produce enolpyruvyl shikimate-3-phosphate and inorganic phosphate. The protein is 3-phosphoshikimate 1-carboxyvinyltransferase of Bacillus velezensis (strain DSM 23117 / BGSC 10A6 / LMG 26770 / FZB42) (Bacillus amyloliquefaciens subsp. plantarum).